A 463-amino-acid polypeptide reads, in one-letter code: Cysteine--tRNA ligase (463 aa).

Position 28 (Cys28) interacts with Zn(2+). The 'HIGH' region signature appears at 30–40 (ITIYDLCHIGH). Zn(2+) is bound by residues Cys209, His234, and Glu238. The 'KMSKS' region signature appears at 266–270 (KMSKS). Lys269 is a binding site for ATP.

This sequence belongs to the class-I aminoacyl-tRNA synthetase family. As to quaternary structure, monomer. The cofactor is Zn(2+).

The protein resides in the cytoplasm. It carries out the reaction tRNA(Cys) + L-cysteine + ATP = L-cysteinyl-tRNA(Cys) + AMP + diphosphate. The protein is Cysteine--tRNA ligase of Proteus mirabilis (strain HI4320).